A 146-amino-acid polypeptide reads, in one-letter code: Putative actin-depolymerizing factor 8 (146 aa).

In terms of domain architecture, ADF-H spans 14–144; sequence PAWIEVPEKS…DLEVLRGRAN (131 aa).

It belongs to the actin-binding proteins ADF family.

Actin-depolymerizing protein. Severs actin filaments (F-actin) and binds to actin monomers. This chain is Putative actin-depolymerizing factor 8 (ADF8), found in Oryza sativa subsp. japonica (Rice).